The following is a 765-amino-acid chain: Glucosamine inositolphosphorylceramide transferase 1 (765 aa).

The next 3 helical transmembrane spans lie at 43-63 (FFAS…WFVF), 394-414 (VILG…LGFL), and 476-496 (MGKF…CVGV). Substrate contacts are provided by residues asparagine 553, 577 to 582 (NSLNNR), 598 to 600 (DDD), arginine 628, and 683 to 687 (FNCED). Aspartate 600 contacts Mn(2+). An intrachain disulfide couples cysteine 685 to cysteine 738. The active site involves aspartate 687.

This sequence belongs to the glycosyltransferase 64 family. Mn(2+) serves as cofactor. In terms of tissue distribution, specifically and highly expressed in developing embryos and mature seeds. Also detected at low levels in stigma and pollen.

Its subcellular location is the membrane. It carries out the reaction an N-(2R-hydroxy-very-long-chain fatty acyl)-(R)-4-hydroxysphingoid base + a 1,2-diacyl-sn-glycero-3-phospho-(1D-myo-inositol) = a 1D-myo-inositol-1-phospho-N-[(R)-2-hydroxy-very-long-chain fatty acyl]-(R)-4-hydroxysphingoid base + a 1,2-diacyl-sn-glycerol. It participates in sphingolipid metabolism. Its function is as follows. Glycosyltransferase that mediates the glycosylation of glycosylinositol phosphorylceramides (GIPCs), the major sphingolipids in the plasma membrane; acts as a HexN(Ac)-specific GIPC sugar transferase and accepts glucosamine (GlcN) and N-acetylglucosamine (GlcNAc) as the sugar unit. Responsible for the glycosylation of a subgroup of GIPCs found in seeds and pollen that contain GlcNAc and GlcN (GlcN(Ac)). Maybe involved in the maintenance of cell-cell adhesion. The sequence is that of Glucosamine inositolphosphorylceramide transferase 1 from Arabidopsis thaliana (Mouse-ear cress).